Reading from the N-terminus, the 179-residue chain is Large ribosomal subunit protein uL5 (179 aa).

Belongs to the universal ribosomal protein uL5 family. Part of the 50S ribosomal subunit; part of the 5S rRNA/L5/L18/L25 subcomplex. Contacts the 5S rRNA and the P site tRNA. Forms a bridge to the 30S subunit in the 70S ribosome.

In terms of biological role, this is one of the proteins that bind and probably mediate the attachment of the 5S RNA into the large ribosomal subunit, where it forms part of the central protuberance. In the 70S ribosome it contacts protein S13 of the 30S subunit (bridge B1b), connecting the 2 subunits; this bridge is implicated in subunit movement. Contacts the P site tRNA; the 5S rRNA and some of its associated proteins might help stabilize positioning of ribosome-bound tRNAs. This Carboxydothermus hydrogenoformans (strain ATCC BAA-161 / DSM 6008 / Z-2901) protein is Large ribosomal subunit protein uL5.